Reading from the N-terminus, the 313-residue chain is Porphobilinogen deaminase (313 aa).

Position 241 is an S-(dipyrrolylmethanemethyl)cysteine (C241).

The protein belongs to the HMBS family. Monomer. Dipyrromethane serves as cofactor.

It catalyses the reaction 4 porphobilinogen + H2O = hydroxymethylbilane + 4 NH4(+). It participates in porphyrin-containing compound metabolism; protoporphyrin-IX biosynthesis; coproporphyrinogen-III from 5-aminolevulinate: step 2/4. It functions in the pathway porphyrin-containing compound metabolism; chlorophyll biosynthesis. Its function is as follows. Tetrapolymerization of the monopyrrole PBG into the hydroxymethylbilane pre-uroporphyrinogen in several discrete steps. The chain is Porphobilinogen deaminase from Chlorobium phaeovibrioides (strain DSM 265 / 1930) (Prosthecochloris vibrioformis (strain DSM 265)).